A 158-amino-acid chain; its full sequence is 2-C-methyl-D-erythritol 2,4-cyclodiphosphate synthase (158 aa).

Asp-9 and His-11 together coordinate a divalent metal cation. 4-CDP-2-C-methyl-D-erythritol 2-phosphate-binding positions include 9-11 and 35-36; these read DVH and HS. His-43 is an a divalent metal cation binding site. 4-CDP-2-C-methyl-D-erythritol 2-phosphate is bound by residues 57 to 59, 62 to 66, 101 to 107, 133 to 136, Phe-140, and Arg-143; these read DIG, FPDTD, AQKPKML, and TTTE.

The protein belongs to the IspF family. In terms of assembly, homotrimer. It depends on a divalent metal cation as a cofactor.

It carries out the reaction 4-CDP-2-C-methyl-D-erythritol 2-phosphate = 2-C-methyl-D-erythritol 2,4-cyclic diphosphate + CMP. It participates in isoprenoid biosynthesis; isopentenyl diphosphate biosynthesis via DXP pathway; isopentenyl diphosphate from 1-deoxy-D-xylulose 5-phosphate: step 4/6. In terms of biological role, involved in the biosynthesis of isopentenyl diphosphate (IPP) and dimethylallyl diphosphate (DMAPP), two major building blocks of isoprenoid compounds. Catalyzes the conversion of 4-diphosphocytidyl-2-C-methyl-D-erythritol 2-phosphate (CDP-ME2P) to 2-C-methyl-D-erythritol 2,4-cyclodiphosphate (ME-CPP) with a corresponding release of cytidine 5-monophosphate (CMP). In Bacillus subtilis (strain 168), this protein is 2-C-methyl-D-erythritol 2,4-cyclodiphosphate synthase.